The chain runs to 630 residues: Ubiquitin carboxyl-terminal hydrolase MINDY-2 (630 aa).

The tract at residues methionine 1–alanine 209 is disordered. Positions glycine 24 to threonine 33 are enriched in polar residues. Serine 94 bears the Phosphoserine mark. Low complexity-rich tracts occupy residues glutamate 141 to aspartate 163 and serine 170 to phenylalanine 191. Cysteine 267 serves as the catalytic Nucleophile. The active-site Proton acceptor is the histidine 449. Residues glycine 508 to glutamine 560 are ubiquitin-binding domain (UBD). The span at glutamate 564–serine 599 shows a compositional bias: low complexity. Residues glutamate 564 to leucine 630 are disordered. Basic and acidic residues predominate over residues serine 606–leucine 630.

It belongs to the MINDY deubiquitinase family. FAM63 subfamily.

The catalysed reaction is Thiol-dependent hydrolysis of ester, thioester, amide, peptide and isopeptide bonds formed by the C-terminal Gly of ubiquitin (a 76-residue protein attached to proteins as an intracellular targeting signal).. Hydrolase that can remove 'Lys-48'-linked conjugated ubiquitin from proteins. Can also bind to polyubiquitin chains of different linkage types, including 'Lys-6', 'Lys-11', 'Lys-29', 'Lys-33' and 'Lys-63'. May play a regulatory role at the level of protein turnover. This Bos taurus (Bovine) protein is Ubiquitin carboxyl-terminal hydrolase MINDY-2 (MINDY2).